Consider the following 260-residue polypeptide: Flap endonuclease Xni (260 aa).

Asp-104 is a Mg(2+) binding site. The 5'-3' exonuclease domain maps to 160-249 (VSPQQLTDYW…LNGNLQQLRL (90 aa)). 5 residues coordinate K(+): Leu-171, Ala-172, Pro-180, Val-182, and Ile-185. An interaction with DNA region spans residues 184–189 (GIGPKS).

It belongs to the Xni family. The cofactor is Mg(2+). Requires K(+) as cofactor.

Its function is as follows. Has flap endonuclease activity. During DNA replication, flap endonucleases cleave the 5'-overhanging flap structure that is generated by displacement synthesis when DNA polymerase encounters the 5'-end of a downstream Okazaki fragment. In Pectobacterium carotovorum subsp. carotovorum (strain PC1), this protein is Flap endonuclease Xni.